Here is a 283-residue protein sequence, read N- to C-terminus: Quinate/shikimate dehydrogenase (NAD(+)) (283 aa).

Residues Ser17, Thr69, Lys73, Asn94, and Asp110 each coordinate shikimate. L-quinate contacts are provided by residues 17–19, Thr69, Lys73, Asn94, and Asp110; that span reads SRT. The active-site Proton acceptor is the Lys73. Residues 137–138, Asp158, Arg163, 203–206, Ala213, Val228, and Gly251 each bind NAD(+); these read GV and PMGM. Gln258 lines the shikimate pocket. Gln258 serves as a coordination point for L-quinate.

It belongs to the shikimate dehydrogenase family. In terms of assembly, homodimer.

The catalysed reaction is L-quinate + NAD(+) = 3-dehydroquinate + NADH + H(+). The enzyme catalyses shikimate + NAD(+) = 3-dehydroshikimate + NADH + H(+). It participates in metabolic intermediate biosynthesis; chorismate biosynthesis; chorismate from D-erythrose 4-phosphate and phosphoenolpyruvate: step 4/7. Its pathway is aromatic compound metabolism; 3,4-dihydroxybenzoate biosynthesis; 3-dehydroquinate from D-quinate (NAD(+) route). Its function is as follows. Involved in the biosynthesis of the chorismate, which leads to the biosynthesis of aromatic amino acids, and plays a key role in the quinate degradation pathway. Catalyzes the NAD(+)-dependent oxidation of both quinate and shikimate to 3-dehydroquinate and 3-dehydroshikimate, respectively. The polypeptide is Quinate/shikimate dehydrogenase (NAD(+)) (Corynebacterium glutamicum (strain R)).